Reading from the N-terminus, the 335-residue chain is Foldase protein PrsA (335 aa).

Positions 1 to 20 (MKKKIFAGAVTLLSVAVLAA) are cleaved as a signal peptide. C21 is lipidated: N-palmitoyl cysteine. A lipid anchor (S-diacylglycerol cysteine) is attached at C21. The PpiC domain maps to 142 to 239 (TPEVTAQIIK…ASYYIVKLVK (98 aa)). Residues 300–335 (TGSSTSSSSAASSSKTSESSSAAESSSKEASSSAAE) are disordered. Positions 302 to 335 (SSTSSSSAASSSKTSESSSAAESSSKEASSSAAE) are enriched in low complexity.

It belongs to the PrsA family.

Its subcellular location is the cell membrane. It carries out the reaction [protein]-peptidylproline (omega=180) = [protein]-peptidylproline (omega=0). Functionally, plays a major role in protein secretion by helping the post-translocational extracellular folding of several secreted proteins. In Streptococcus sanguinis (strain SK36), this protein is Foldase protein PrsA.